A 388-amino-acid chain; its full sequence is S-adenosylmethionine synthase (388 aa).

H16 lines the ATP pocket. Residue D18 coordinates Mg(2+). Residue E44 coordinates K(+). L-methionine contacts are provided by E57 and Q100. Residues 100 to 110 are flexible loop; that stretch reads QSPEIAQGVDR. Residues 165–167, D240, 246–247, A263, and K267 contribute to the ATP site; these read DAK and RK. An L-methionine-binding site is contributed by D240. Residue K271 participates in L-methionine binding.

It belongs to the AdoMet synthase family. In terms of assembly, homotetramer; dimer of dimers. It depends on Mg(2+) as a cofactor. K(+) serves as cofactor.

It localises to the cytoplasm. The enzyme catalyses L-methionine + ATP + H2O = S-adenosyl-L-methionine + phosphate + diphosphate. It participates in amino-acid biosynthesis; S-adenosyl-L-methionine biosynthesis; S-adenosyl-L-methionine from L-methionine: step 1/1. Its function is as follows. Catalyzes the formation of S-adenosylmethionine (AdoMet) from methionine and ATP. The overall synthetic reaction is composed of two sequential steps, AdoMet formation and the subsequent tripolyphosphate hydrolysis which occurs prior to release of AdoMet from the enzyme. This Acinetobacter baumannii (strain ACICU) protein is S-adenosylmethionine synthase.